The following is a 247-amino-acid chain: Small ribosomal subunit protein uS2 (247 aa).

The protein belongs to the universal ribosomal protein uS2 family.

This Cupriavidus taiwanensis (strain DSM 17343 / BCRC 17206 / CCUG 44338 / CIP 107171 / LMG 19424 / R1) (Ralstonia taiwanensis (strain LMG 19424)) protein is Small ribosomal subunit protein uS2.